A 157-amino-acid polypeptide reads, in one-letter code: MFDVLMYLFETYIHTEAELRVDQDKLEQDLTDAGFDREDIYNALLWLEKLADYQEGLAEPMQLASDPLSMRIYTPEECERLDASCRGFLLFLEQIQVLNLETREMVIERVLALDNAEFELDDLKWVILMVLFNIPGCENAYQQMEELLFEVNEGMLH.

Belongs to the Smg family.

In Escherichia coli O8 (strain IAI1), this protein is Protein Smg.